Here is a 208-residue protein sequence, read N- to C-terminus: 28 kDa heat- and acid-stable phosphoprotein homolog (208 aa).

Disordered regions lie at residues 1 to 133 (MAGG…VTKK) and 145 to 208 (LSRR…LGLA). The span at 16-44 (FGRDYERSKGKISRDRVYDEEDIIKRNQE) shows a compositional bias: basic and acidic residues. Composition is skewed to low complexity over residues 52–69 (GSES…NKSK) and 84–100 (RNPN…PTTK). Residues 105-121 (SDSEDDSDKESDSEDEI) are compositionally biased toward acidic residues. Residues 137 to 206 (INVNAKVELS…EKMAERRRLG (70 aa)) are a coiled coil. Composition is skewed to basic and acidic residues over residues 145–154 (LSRREKEELA) and 162–208 (QNEK…LGLA).

The protein belongs to the PDAP1 family.

The sequence is that of 28 kDa heat- and acid-stable phosphoprotein homolog from Dictyostelium discoideum (Social amoeba).